The chain runs to 400 residues: Nicotinate phosphoribosyltransferase (400 aa).

His-220 bears the Phosphohistidine; by autocatalysis mark.

It belongs to the NAPRTase family. Transiently phosphorylated on a His residue during the reaction cycle. Phosphorylation strongly increases the affinity for substrates and increases the rate of nicotinate D-ribonucleotide production. Dephosphorylation regenerates the low-affinity form of the enzyme, leading to product release.

It carries out the reaction nicotinate + 5-phospho-alpha-D-ribose 1-diphosphate + ATP + H2O = nicotinate beta-D-ribonucleotide + ADP + phosphate + diphosphate. The protein operates within cofactor biosynthesis; NAD(+) biosynthesis; nicotinate D-ribonucleotide from nicotinate: step 1/1. Catalyzes the synthesis of beta-nicotinate D-ribonucleotide from nicotinate and 5-phospho-D-ribose 1-phosphate at the expense of ATP. The sequence is that of Nicotinate phosphoribosyltransferase from Escherichia coli O17:K52:H18 (strain UMN026 / ExPEC).